The primary structure comprises 401 residues: Nicotinate phosphoribosyltransferase (401 aa).

Phosphohistidine; by autocatalysis is present on histidine 221.

The protein belongs to the NAPRTase family. Transiently phosphorylated on a His residue during the reaction cycle. Phosphorylation strongly increases the affinity for substrates and increases the rate of nicotinate D-ribonucleotide production. Dephosphorylation regenerates the low-affinity form of the enzyme, leading to product release.

It carries out the reaction nicotinate + 5-phospho-alpha-D-ribose 1-diphosphate + ATP + H2O = nicotinate beta-D-ribonucleotide + ADP + phosphate + diphosphate. It participates in cofactor biosynthesis; NAD(+) biosynthesis; nicotinate D-ribonucleotide from nicotinate: step 1/1. Functionally, catalyzes the synthesis of beta-nicotinate D-ribonucleotide from nicotinate and 5-phospho-D-ribose 1-phosphate at the expense of ATP. This chain is Nicotinate phosphoribosyltransferase, found in Erwinia tasmaniensis (strain DSM 17950 / CFBP 7177 / CIP 109463 / NCPPB 4357 / Et1/99).